Reading from the N-terminus, the 312-residue chain is Malate dehydrogenase (312 aa).

Residues G7 to G13 and D34 each bind NAD(+). R81 and R87 together coordinate substrate. NAD(+) is bound by residues N94 and I117–N119. N119 and R153 together coordinate substrate. Catalysis depends on H177, which acts as the Proton acceptor. M227 provides a ligand contact to NAD(+).

It belongs to the LDH/MDH superfamily. MDH type 1 family. Homodimer.

The catalysed reaction is (S)-malate + NAD(+) = oxaloacetate + NADH + H(+). Catalyzes the reversible oxidation of malate to oxaloacetate. In Escherichia fergusonii (strain ATCC 35469 / DSM 13698 / CCUG 18766 / IAM 14443 / JCM 21226 / LMG 7866 / NBRC 102419 / NCTC 12128 / CDC 0568-73), this protein is Malate dehydrogenase.